Consider the following 66-residue polypeptide: Large ribosomal subunit protein uL29 (66 aa).

Belongs to the universal ribosomal protein uL29 family.

The polypeptide is Large ribosomal subunit protein uL29 (Helicobacter pylori (strain HPAG1)).